Consider the following 334-residue polypeptide: Probable GTP 3',8-cyclase (334 aa).

Residues 24 to 256 form the Radical SAM core domain; that stretch reads PYGRKVTGLR…RKKYMIDGVE (233 aa). GTP is bound at residue Arg-33. [4Fe-4S] cluster-binding residues include Cys-40 and Cys-44. Tyr-46 is an S-adenosyl-L-methionine binding site. [4Fe-4S] cluster is bound at residue Cys-47. Lys-85 is a GTP binding site. Gly-89 contacts S-adenosyl-L-methionine. Thr-113 is a GTP binding site. Ser-137 provides a ligand contact to S-adenosyl-L-methionine. Residue Lys-176 participates in GTP binding. The [4Fe-4S] cluster site is built by Cys-269 and Cys-272. GTP is bound at residue 274–276; that stretch reads RLR. [4Fe-4S] cluster is bound at residue Cys-286.

This sequence belongs to the radical SAM superfamily. MoaA family. The cofactor is [4Fe-4S] cluster.

It catalyses the reaction GTP + AH2 + S-adenosyl-L-methionine = (8S)-3',8-cyclo-7,8-dihydroguanosine 5'-triphosphate + 5'-deoxyadenosine + L-methionine + A + H(+). It participates in cofactor biosynthesis; molybdopterin biosynthesis. Its function is as follows. Catalyzes the cyclization of GTP to (8S)-3',8-cyclo-7,8-dihydroguanosine 5'-triphosphate. The polypeptide is Probable GTP 3',8-cyclase (Methanosarcina mazei (strain ATCC BAA-159 / DSM 3647 / Goe1 / Go1 / JCM 11833 / OCM 88) (Methanosarcina frisia)).